A 1116-amino-acid polypeptide reads, in one-letter code: cGMP-specific 3',5'-cyclic phosphodiesterase (1116 aa).

2 disordered regions span residues 1–36 and 82–136; these read MTDV…NGAA and KSEC…ATQQ. Residues 15-28 show a composition bias toward low complexity; it reads VSSTSSEVAVETTS. The span at 86–136 shows a compositional bias: polar residues; the sequence is HSQSNNNQHVETAPSKQSSDSEASAPTTVSIPSANAKINSSSSGKTTATQQ. GAF domains are found at residues 241–393 and 425–611; these read DIDV…GIGI and NLEC…GLGI. Residues 641 to 964 form the PDEase domain; the sequence is SQDQTEKLAQ…RNWQDLAEKV (324 aa). H717 serves as the catalytic Proton donor. Residues H721, H757, D758, and D868 each contribute to the a divalent metal cation site. Disordered stretches follow at residues 1005-1031 and 1067-1116; these read QHGG…LSIK and HVSE…CALL. Basic and acidic residues-rich tracts occupy residues 1014-1023 and 1067-1076; these read EDTHTPEHQR and HVSEDMDDKS. Positions 1085–1103 are enriched in low complexity; sequence SGSVGRMSASSSTSSAGTV. Over residues 1106–1116 the composition is skewed to basic residues; the sequence is SKKRSKLCALL. A Cysteine methyl ester modification is found at C1113. C1113 carries the S-farnesyl cysteine lipid modification. A propeptide spans 1114–1116 (removed in mature form); that stretch reads ALL.

This sequence belongs to the cyclic nucleotide phosphodiesterase family. In terms of assembly, interacts with PrBP. A divalent metal cation is required as a cofactor.

Its subcellular location is the cell membrane. It carries out the reaction 3',5'-cyclic GMP + H2O = GMP + H(+). In terms of biological role, has a role regulating cGMP transport in Malpighian tubule principal cells. This Drosophila mojavensis (Fruit fly) protein is cGMP-specific 3',5'-cyclic phosphodiesterase.